The sequence spans 386 residues: Lipoyl synthase, mitochondrial (386 aa).

7 residues coordinate [4Fe-4S] cluster: Cys-110, Cys-115, Cys-121, Cys-141, Cys-145, Cys-148, and Ser-356. The 222-residue stretch at 124–345 folds into the Radical SAM core domain; the sequence is GNDKSKATAT…KEQALEMGFL (222 aa).

Belongs to the radical SAM superfamily. Lipoyl synthase family. Requires [4Fe-4S] cluster as cofactor.

The protein localises to the mitochondrion. The catalysed reaction is [[Fe-S] cluster scaffold protein carrying a second [4Fe-4S](2+) cluster] + N(6)-octanoyl-L-lysyl-[protein] + 2 oxidized [2Fe-2S]-[ferredoxin] + 2 S-adenosyl-L-methionine + 4 H(+) = [[Fe-S] cluster scaffold protein] + N(6)-[(R)-dihydrolipoyl]-L-lysyl-[protein] + 4 Fe(3+) + 2 hydrogen sulfide + 2 5'-deoxyadenosine + 2 L-methionine + 2 reduced [2Fe-2S]-[ferredoxin]. It participates in protein modification; protein lipoylation via endogenous pathway; protein N(6)-(lipoyl)lysine from octanoyl-[acyl-carrier-protein]: step 2/2. Functionally, catalyzes the radical-mediated insertion of two sulfur atoms into the C-6 and C-8 positions of the octanoyl moiety bound to the lipoyl domains of lipoate-dependent enzymes, thereby converting the octanoylated domains into lipoylated derivatives. This is Lipoyl synthase, mitochondrial from Zygosaccharomyces rouxii (strain ATCC 2623 / CBS 732 / NBRC 1130 / NCYC 568 / NRRL Y-229).